A 1612-amino-acid polypeptide reads, in one-letter code: MAYTQQATNAALASTLRGNNPLVNDLANRRLYESAVEQCNAHDRRPKVNFLRSISEEQTLIATKAYPEFQITFYNTQNAVHSLAGGLRSLELEYLMMQIPYGSTTYDIGGNFAAHMFKGRDYVHCCMPNMDLRDVMRHNAQKDSIELYLSKLAQKKKVIPPYQKPCFDKYTDDPQSVVCSKPFQHCEGVSHCTDKVYAVALHSLYDIPADEFGAALLRRNVHVCYAAFHFSENLLLEDSYVSLDDIGAFFSREGDMLNFSFVAESTLNYTHSYSNVLKYVCKTYFPASSREVYMKEFLVTRVNTWFCKFSRLDTFVLYRGVYHRGVDKEQFYSAMEDAWHYKKTLAMMNSERILLEDSSSVNYWFPKMKDMVIVPLFDVSLQNEGKRLARKEVMVSKDFVYTVLNHIRTYQSKALTYANVLSFVESIRSRVIINGVTARSEWDVDKALLQSLSMTFFLQTKLAMLKDDLVVQKFQVHSKSLTEYVWDEITAAFHNCFPTIKERLINKKLITVSEKALEIKVPDLYVTFHDRLVKEYKSSVEMPVLDVKKSLEEAEVMYNALSEISILKDSDKFDVDVFSRMCNTLGVDPLVAAKVMVAVVSNESGLTLTFERPTEANVALALQPTITSKEEGSLKIVSSDVGESSIKEVVRKSEISMLGLTGNTVSDEFQRSTEIESLQQFHMVSTETIIRKQMHAMVYTGPLKVQQCKNYLDSLVASLSAAVSNLKKIIKDTAAIDLETKEKFGVYDVCLKKWLVKPLSKGHAWGVVMDSDYKCFVALLTYDGENIVCGETWRRVAVSSESLVYSDMGKIRAIRSVLKDGEPHISSAKVTLVDGVPGCGKTKEILSRVNFDEDLVLVPGKQAAEMIRRRANSSGLIVATKENVRTVDSFLMNYGRGPCQYKRLFLDEGLMLHPGCVNFLVGMSLCSEAFVYGDTQQIPYINRVATFPYPKHLSQLEVDAVETRRTTLRCPADITFFLNQKYEGQVMCTSSVTRSVSHEVIQGAAVMNPVSKPLKGKVITFTQSDKSLLLSRGYEDVHTVHEVQGETFEDVSLVRLTPTPVGIISKQSPHLLVSLSRHTRSIKYYTVVLDAVVSVLRDLECVSSYLLDMYKVDVSTQYQLQIESVYKGVNLFVAAPKTGDVSDMQYYYDKCLPGNSTILNEYDAVTMQIRENSLNVKDCVLDMSKSVPLPRESETTLKPVIRTAAEKPRKPGLLENLVAMIKRNFNSPELVGVVDIEDTASLVVDKFFDAYLIKEKKKPKNIPLLSRASLERWIEKQEKSTIGQLADFDFIDLPAVDQYRHMIKQQPKQRLDLSIQTEYPALQTIVYHSKKINALFGPVFSELTRQLLETIDSSRFMFYTRKTPTQIEEFFSDLDSNVPMDILELDISKYDKSQNEFHCAVEYEIWKRLGLDDFLAEVWKHGHRKTTLKDYTAGIKTCLWYQRKSGDVTTFIGNTIIIAACLSSMLPMERLIKGAFCGDDSILYFPKGTDFPDIQQGANLLWNFEAKLFRKRYGYFCGRYIIHHDRGCIVYYDPLKLISKLGAKHIKNREHLEEFRTSLCDVAGSLNNCAYYTHLDDAVGEVIKTAPPGSFVYRALVKYLCDKRLFQTLFLE.

The methyltransferase stretch occupies residues 52-466 (RSISEEQTLI…FLQTKLAMLK (415 aa)). The Alphavirus-like MT domain occupies 72 to 280 (TFYNTQNAVH…HSYSNVLKYV (209 aa)). The (+)RNA virus helicase ATP-binding domain maps to 803–964 (LVYSDMGKIR…QLEVDAVETR (162 aa)). Residues 831-1086 (TLVDGVPGCG…RHTRSIKYYT (256 aa)) are helicase. ATP contacts are provided by residues 838–843 (GCGKTK), arginine 870, 968–969 (LR), arginine 1077, and 1098–1101 (DLEC). Residues 965-1117 (RTTLRCPADI…DMYKVDVSTQ (153 aa)) form the (+)RNA virus helicase C-terminal domain. Residues 1380–1493 (MDILELDISK…YFPKGTDFPD (114 aa)) enclose the RdRp catalytic domain.

It belongs to the ssRNA positive-strand viruses RNA-directed RNA polymerase family. In terms of assembly, heterodimer of a large and a small subunit. Both large and small subunits interact, via an ATP bridge, with host protein Tm-1 (e.g. tomato Tm-1 AC A7M6E7 and AC A7M6E8).

It catalyses the reaction RNA(n) + a ribonucleoside 5'-triphosphate = RNA(n+1) + diphosphate. The catalysed reaction is ATP + H2O = ADP + phosphate + H(+). In resistant plants, is bound by host protein Tm-1 (e.g. tomato Tm-1 AC A7M6E7), thereby inhibiting replication complex activity. In terms of biological role, is an RNA-dependent RNA polymerase active in viral RNA replication. Functionally, is a methyltransferase active in RNA capping and an RNA helicase. Methyltransferase displays a cytoplasmic capping enzyme activity. This function is necessary since all viral RNAs are synthesized in the cytoplasm, and host capping enzymes are restricted to the nucleus. Helicase region probably exhibits NTPase and RNA unwinding activities (Potential). It also acts as a suppressor of RNA-mediated gene silencing, also known as post-transcriptional gene silencing (PTGS), a mechanism of plant viral defense that limits the accumulation of viral RNAs. May mediate silencing suppression through either inhibition of HEN1-mediated siRNA or siRNA demethylation. This is Replicase large subunit from Pepper mild mottle virus (strain Japan) (PMMV-J).